The sequence spans 250 residues: Cell division protein ZapD (250 aa).

It belongs to the ZapD family. As to quaternary structure, interacts with FtsZ.

The protein localises to the cytoplasm. Its function is as follows. Cell division factor that enhances FtsZ-ring assembly. Directly interacts with FtsZ and promotes bundling of FtsZ protofilaments, with a reduction in FtsZ GTPase activity. The sequence is that of Cell division protein ZapD from Serratia proteamaculans (strain 568).